A 183-amino-acid chain; its full sequence is Ribosome-binding factor A (183 aa).

The interval 132–183 (PAGEADPYRDNGSVAQSPAPGGLGIRTSDGPEAVEAPLTCGGDTGDDDRPKE) is disordered.

This sequence belongs to the RbfA family. In terms of assembly, monomer. Binds 30S ribosomal subunits, but not 50S ribosomal subunits or 70S ribosomes.

It localises to the cytoplasm. In terms of biological role, one of several proteins that assist in the late maturation steps of the functional core of the 30S ribosomal subunit. Associates with free 30S ribosomal subunits (but not with 30S subunits that are part of 70S ribosomes or polysomes). Required for efficient processing of 16S rRNA. May interact with the 5'-terminal helix region of 16S rRNA. The polypeptide is Ribosome-binding factor A (Mycobacterium tuberculosis (strain ATCC 25177 / H37Ra)).